Here is a 1213-residue protein sequence, read N- to C-terminus: DNA-directed RNA polymerase subunit beta (1213 aa).

A disordered region spans residues 1169–1213 (SRMAEEQEKKKLAEETGKSGDKKENKKDADKPVAPADESDDKVSK). Positions 1171–1199 (MAEEQEKKKLAEETGKSGDKKENKKDADK) are enriched in basic and acidic residues.

The protein belongs to the RNA polymerase beta chain family. As to quaternary structure, the RNAP catalytic core consists of 2 alpha, 1 beta, 1 beta' and 1 omega subunit. When a sigma factor is associated with the core the holoenzyme is formed, which can initiate transcription.

The enzyme catalyses RNA(n) + a ribonucleoside 5'-triphosphate = RNA(n+1) + diphosphate. In terms of biological role, DNA-dependent RNA polymerase catalyzes the transcription of DNA into RNA using the four ribonucleoside triphosphates as substrates. This Lactobacillus helveticus (strain DPC 4571) protein is DNA-directed RNA polymerase subunit beta.